The sequence spans 206 residues: MKLLIFICLAAVALARPKPPLRHQEHLQNEPDSREELFKERKFLRFPEVPLLSQFRQEIINELNRNHGMEGHEQRGSSSSSSEEVVGNSAEQKHVQKEEDVPSQSYLGHLQGLNKYKLRQLEAIHDQELHRTNEDKHTQQGEPMKGVNQEQAYFYFEPLHQFYQLDAYPYATWYYPPQYIAHPLFTNIPQPTAPEKGGKTEIMPQW.

Residues 1-15 (MKLLIFICLAAVALA) form the signal peptide. Phosphoserine occurs at positions 33, 77, 78, 79, 80, 81, 82, and 89. Residues 67–106 (HGMEGHEQRGSSSSSSEEVVGNSAEQKHVQKEEDVPSQSY) form a disordered region. The segment covering 91 to 100 (EQKHVQKEED) has biased composition (basic and acidic residues).

The protein belongs to the alpha-casein family. As to expression, mammary gland specific. Secreted in milk.

The protein localises to the secreted. In terms of biological role, important role in the capacity of milk to transport calcium phosphate. The chain is Alpha-S1-casein (CSN1S1) from Sus scrofa (Pig).